A 636-amino-acid polypeptide reads, in one-letter code: DNA-directed RNA polymerase subunit gamma (636 aa).

Residues Cys71, Cys73, Cys86, and Cys89 each contribute to the Zn(2+) site. Residues Asp467, Asp469, and Asp471 each coordinate Mg(2+).

This sequence belongs to the RNA polymerase beta' chain family. RpoC1 subfamily. In cyanobacteria the RNAP catalytic core is composed of 2 alpha, 1 beta, 1 beta', 1 gamma and 1 omega subunit. When a sigma factor is associated with the core the holoenzyme is formed, which can initiate transcription. The cofactor is Mg(2+). Requires Zn(2+) as cofactor.

The enzyme catalyses RNA(n) + a ribonucleoside 5'-triphosphate = RNA(n+1) + diphosphate. In terms of biological role, DNA-dependent RNA polymerase catalyzes the transcription of DNA into RNA using the four ribonucleoside triphosphates as substrates. The protein is DNA-directed RNA polymerase subunit gamma of Picosynechococcus sp. (strain ATCC 27264 / PCC 7002 / PR-6) (Agmenellum quadruplicatum).